The following is a 398-amino-acid chain: Ras-related GTP-binding protein C (398 aa).

Residues 1 to 56 (MSLQYGAEETPLAGSYGAADSFPKDFGYGVEEEEEEAAAGGGGGAGAGGGCGPGGA) form a disordered region. S2 bears the N-acetylserine mark. A phosphoserine mark is found at S2 and S15. Residues 39–55 (AGGGGGAGAGGGCGPGG) are compositionally biased toward gly residues. 6 residues coordinate GDP: R70, S71, G72, K73, S74, and S75. K73 is a GTP binding site. Residues T89 and T95 each coordinate GTP. A Phosphothreonine modification is found at T95. GDP is bound by residues H177, K178, D180, and I219. D180 serves as a coordination point for GTP.

The protein belongs to the GTR/RAG GTP-binding protein family. Forms a heterodimer with RRAGA, in a sequence-independent manner, and RRAGB. Heterodimerization stabilizes proteins of the heterodimer. The GDP-bound form of RRAGC (in complex with the GTP-bound form of RRAGA or RRAGB), interacts with RPTOR, thereby promoting recruitment of mTORC1 to the lysosomes. Component of the lysosomal folliculin complex (LFC), composed of FLCN, FNIP1 (or FNIP2), RagA/RRAGA or RagB/RRAGB GDP-bound, RagC/RRAGC or RagD/RRAGD GTP-bound, and Ragulator. Interacts with NOL8. Interacts with SH3BP4; the interaction with this negative regulator is most probably direct, preferentially occurs with the inactive GDP-bound form of RRAGB, is negatively regulated by amino acids and prevents interaction with RPTOR. The Rag heterodimer interacts with SLC38A9; the probable amino acid sensor. Interacts with SESN1, SESN2 and SESN3. Interacts with PIP4P1. The GDP-bound form interacts with TFEB. The GDP-bound form interacts with TFE3. In terms of tissue distribution, expressed most abundantly in kidney. Moderately expressed in brain, ovary, and testis, and detected at lower levels in heart, liver, and muscle. Not detected in lung, spleen, and small intestine. Widely expressed in tumor cells, with expression being specifically up-regulated in highly metastatic cells.

It localises to the cytoplasm. It is found in the nucleus. The protein localises to the lysosome membrane. It catalyses the reaction GTP + H2O = GDP + phosphate + H(+). Its activity is regulated as follows. The activation of RagC/RRAGC is mediated by a GTPase activating protein (GAP). In high-amino acid conditions, activated by GTPase activating protein FLCN that stimulates RRAGC GTPase activity to turn it into its active GDP-bound form. In response to amino acid depletion, the GATOR1 complex inactivates RagC/RRAGC by securing the GTP-bound inactive form. Functionally, guanine nucleotide-binding protein that plays a crucial role in the cellular response to amino acid availability through regulation of the mTORC1 signaling cascade. Forms heterodimeric Rag complexes with RagA/RRAGA or RagB/RRAGB and cycles between an inactive GTP-bound and an active GDP-bound form: RagC/RRAGC is in its active form when GDP-bound RagC/RRAGC forms a complex with GTP-bound RagA/RRAGA (or RagB/RRAGB) and in an inactive form when GTP-bound RagC/RRAGC heterodimerizes with GDP-bound RagA/RRAGA (or RagB/RRAGB). In its GDP-bound active form, promotes the recruitment of mTORC1 to the lysosomes and its subsequent activation by the GTPase RHEB. This is a crucial step in the activation of the MTOR signaling cascade by amino acids. Also plays a central role in the non-canonical mTORC1 complex, which acts independently of RHEB and specifically mediates phosphorylation of MiT/TFE factors TFEB and TFE3: GDP-bound RagC/RRAGC mediates recruitment of MiT/TFE factors TFEB and TFE3. In Mus musculus (Mouse), this protein is Ras-related GTP-binding protein C.